The primary structure comprises 407 residues: Transcriptional regulator UL34 (407 aa).

2 disordered regions span residues 268–330 (AAGP…EELF) and 388–407 (SPSV…PLCI). Positions 273–286 (EADENNDEGEEDDD) are enriched in acidic residues. A compositionally biased stretch (basic and acidic residues) spans 287-301 (ELRHSDPAPLHESKK). The segment covering 302–312 (PRNARRPRTRV) has biased composition (basic residues).

Belongs to the HHV-5 UL34 protein family.

The protein resides in the host nucleus. Its function is as follows. Acts as a transcriptional repressor of the US3 gene expression through a specific DNA sequence named the transcriptional repressive element (tre). This Human cytomegalovirus (strain Towne) (HHV-5) protein is Transcriptional regulator UL34 (UL34).